A 204-amino-acid polypeptide reads, in one-letter code: ATP-dependent Clp protease proteolytic subunit (204 aa).

S101 acts as the Nucleophile in catalysis. H126 is a catalytic residue.

This sequence belongs to the peptidase S14 family. In terms of assembly, component of the chloroplastic Clp protease core complex.

The protein localises to the plastid. The protein resides in the chloroplast stroma. The catalysed reaction is Hydrolysis of proteins to small peptides in the presence of ATP and magnesium. alpha-casein is the usual test substrate. In the absence of ATP, only oligopeptides shorter than five residues are hydrolyzed (such as succinyl-Leu-Tyr-|-NHMec, and Leu-Tyr-Leu-|-Tyr-Trp, in which cleavage of the -Tyr-|-Leu- and -Tyr-|-Trp bonds also occurs).. In terms of biological role, cleaves peptides in various proteins in a process that requires ATP hydrolysis. Has a chymotrypsin-like activity. Plays a major role in the degradation of misfolded proteins. The sequence is that of ATP-dependent Clp protease proteolytic subunit from Anthoceros angustus (Hornwort).